Here is a 283-residue protein sequence, read N- to C-terminus: Pantothenate synthetase (283 aa).

30–37 (MGYYHSGH) is an ATP binding site. The active-site Proton donor is H37. Q61 is a (R)-pantoate binding site. Position 61 (Q61) interacts with beta-alanine. Residue 147–150 (GQKD) participates in ATP binding. Q153 contributes to the (R)-pantoate binding site. Residues V176 and 184–187 (MSSR) contribute to the ATP site.

It belongs to the pantothenate synthetase family. Homodimer.

It localises to the cytoplasm. It carries out the reaction (R)-pantoate + beta-alanine + ATP = (R)-pantothenate + AMP + diphosphate + H(+). It functions in the pathway cofactor biosynthesis; (R)-pantothenate biosynthesis; (R)-pantothenate from (R)-pantoate and beta-alanine: step 1/1. In terms of biological role, catalyzes the condensation of pantoate with beta-alanine in an ATP-dependent reaction via a pantoyl-adenylate intermediate. In Nitratidesulfovibrio vulgaris (strain DSM 19637 / Miyazaki F) (Desulfovibrio vulgaris), this protein is Pantothenate synthetase.